The primary structure comprises 82 residues: RNA-binding protein Hfq (82 aa).

The region spanning 9–68 (DPFLNTLRKEHVPVSIYLVNGIKLQGKVDSFDQYVIMLKNTVSQMVYKHAISTIVPGRPV) is the Sm domain.

It belongs to the Hfq family. In terms of assembly, homohexamer.

Functionally, RNA chaperone that binds small regulatory RNA (sRNAs) and mRNAs to facilitate mRNA translational regulation in response to envelope stress, environmental stress and changes in metabolite concentrations. Also binds with high specificity to tRNAs. This chain is RNA-binding protein Hfq, found in Methylococcus capsulatus (strain ATCC 33009 / NCIMB 11132 / Bath).